Here is a 103-residue protein sequence, read N- to C-terminus: MAAISINVSTLKPLGDRVFVKVSESEEKTAGGILLPDSAKEKPQIGEVVAVGEGKRNDDGSRSAVDVKVGDKVLYSKYAGTDIKLSGDDYVLLSEKDILATVA.

It belongs to the GroES chaperonin family. Heptamer of 7 subunits arranged in a ring. Interacts with the chaperonin GroEL.

The protein resides in the cytoplasm. Functionally, together with the chaperonin GroEL, plays an essential role in assisting protein folding. The GroEL-GroES system forms a nano-cage that allows encapsulation of the non-native substrate proteins and provides a physical environment optimized to promote and accelerate protein folding. GroES binds to the apical surface of the GroEL ring, thereby capping the opening of the GroEL channel. The chain is Co-chaperonin GroES from Picosynechococcus sp. (strain ATCC 27264 / PCC 7002 / PR-6) (Agmenellum quadruplicatum).